We begin with the raw amino-acid sequence, 577 residues long: Protein GPR108 (577 aa).

An N-terminal signal peptide occupies residues 1 to 34 (MAVSERRGLSGESPAQCRWEYLSLLVLMLSGCSG). N-linked (GlcNAc...) asparagine glycans are attached at residues Asn59 and Asn111. A disordered region spans residues 144-224 (LLPEAPSQSG…TRGPSGKEKD (81 aa)). N-linked (GlcNAc...) asparagine glycosylation is found at Asn233 and Asn237. 7 helical membrane-spanning segments follow: residues 296–316 (LYLIMSACFLAAGIFWVSVLC), 325–345 (IHWLMAALAFTKSVSLLFHSI), 369–389 (LLKGALLFITIALIGSGWAFV), 400–420 (IFGIVIPLQVLANVAYIVIES), 434–454 (ILFLVDLICCGAILFPVVWSI), 482–502 (VMVICYIYFTRIIAILLRVAV), and 506–526 (WQWLYQLLVESSTLAFFVLTG).

It belongs to the LU7TM family.

It is found in the golgi apparatus. The protein resides in the cis-Golgi network membrane. The protein localises to the trans-Golgi network membrane. Its subcellular location is the golgi apparatus membrane. Functionally, may play a role in intracellular immune modulation by activating NF-kappaB response and attenuating Toll-like-receptor response. In Rattus norvegicus (Rat), this protein is Protein GPR108 (Gpr108).